Consider the following 212-residue polypeptide: Protein-L-isoaspartate O-methyltransferase (212 aa).

Ser60 is a catalytic residue.

This sequence belongs to the methyltransferase superfamily. L-isoaspartyl/D-aspartyl protein methyltransferase family.

It localises to the cytoplasm. The enzyme catalyses [protein]-L-isoaspartate + S-adenosyl-L-methionine = [protein]-L-isoaspartate alpha-methyl ester + S-adenosyl-L-homocysteine. Functionally, catalyzes the methyl esterification of L-isoaspartyl residues in peptides and proteins that result from spontaneous decomposition of normal L-aspartyl and L-asparaginyl residues. It plays a role in the repair and/or degradation of damaged proteins. This chain is Protein-L-isoaspartate O-methyltransferase, found in Methanococcus maripaludis (strain C5 / ATCC BAA-1333).